We begin with the raw amino-acid sequence, 267 residues long: 2-keto-3-deoxy-L-rhamnonate aldolase (267 aa).

Catalysis depends on H49, which acts as the Proton acceptor. Q151 lines the substrate pocket. E153 contributes to the Mg(2+) binding site. Substrate-binding residues include A178 and D179. D179 lines the Mg(2+) pocket.

This sequence belongs to the HpcH/HpaI aldolase family. KDR aldolase subfamily. In terms of assembly, homohexamer. Requires Mg(2+) as cofactor.

The enzyme catalyses 2-dehydro-3-deoxy-L-rhamnonate = (S)-lactaldehyde + pyruvate. Functionally, catalyzes the reversible retro-aldol cleavage of 2-keto-3-deoxy-L-rhamnonate (KDR) to pyruvate and lactaldehyde. The chain is 2-keto-3-deoxy-L-rhamnonate aldolase from Shigella dysenteriae serotype 1 (strain Sd197).